Reading from the N-terminus, the 524-residue chain is Alkaline phosphatase, tissue-nonspecific isozyme (524 aa).

A signal peptide spans 1–17 (MILPFLVLAIGTCLTNS). Position 60 (Asp-60) interacts with Mg(2+). Asp-60 and Ser-110 together coordinate Zn(2+). The active-site Phosphoserine intermediate is the Ser-110. Ser-110 carries the post-translational modification Phosphoserine. The cysteines at positions 139 and 201 are disulfide-linked. Asn-140 carries an N-linked (GlcNAc...) asparagine glycan. Thr-173 contacts Mg(2+). A glycan (N-linked (GlcNAc...) asparagine) is linked at Asn-230. Glu-235 contributes to the Ca(2+) binding site. An N-linked (GlcNAc...) asparagine glycan is attached at Asn-271. Ca(2+)-binding residues include Phe-290 and Glu-291. N-linked (GlcNAc...) asparagine glycosylation is present at Asn-303. Residue Asp-306 participates in Ca(2+) binding. Glu-332 provides a ligand contact to Mg(2+). Zn(2+) contacts are provided by Asp-337, His-341, Asp-378, and His-379. N-linked (GlcNAc...) asparagine glycosylation is present at Asn-430. Residue His-454 participates in Zn(2+) binding. Cys-489 and Cys-497 are disulfide-bonded. Ser-501 carries the GPI-anchor amidated serine lipid modification. Residues 502–524 (SASSPSPGALLLPLALFPLRTLF) constitute a propeptide, removed in mature form.

The protein belongs to the alkaline phosphatase family. As to quaternary structure, homodimer. Mg(2+) is required as a cofactor. Zn(2+) serves as cofactor. It depends on Ca(2+) as a cofactor. Post-translationally, N-glycosylated.

The protein resides in the cell membrane. It localises to the extracellular vesicle membrane. It is found in the mitochondrion membrane. Its subcellular location is the mitochondrion intermembrane space. It carries out the reaction a phosphate monoester + H2O = an alcohol + phosphate. The catalysed reaction is diphosphate + H2O = 2 phosphate + H(+). The enzyme catalyses pyridoxal 5'-phosphate + H2O = pyridoxal + phosphate. It catalyses the reaction phosphoethanolamine + H2O = ethanolamine + phosphate. It carries out the reaction N-phosphocreatine + H2O = creatine + phosphate. The catalysed reaction is ATP + H2O = ADP + phosphate + H(+). The enzyme catalyses ADP + H2O = AMP + phosphate + H(+). It catalyses the reaction AMP + H2O = adenosine + phosphate. With respect to regulation, phosphatase activity is specifically inhibited by 5-((5-chloro-2-methoxyphenyl)sulfonamido)nicotinamide (SBI-425). Alkaline phosphatase that metabolizes various phosphate compounds and plays a key role in skeletal mineralization and adaptive thermogenesis. Has broad substrate specificity and can hydrolyze a considerable variety of compounds: however, only a few substrates, such as diphosphate (inorganic pyrophosphate; PPi), pyridoxal 5'-phosphate (PLP) and N-phosphocreatine are natural substrates. Plays an essential role in skeletal and dental mineralization via its ability to hydrolyze extracellular diphosphate, a potent mineralization inhibitor, to phosphate: it thereby promotes hydroxyapatite crystal formation and increases inorganic phosphate concentration. Acts in a non-redundant manner with PHOSPHO1 in skeletal mineralization: while PHOSPHO1 mediates the initiation of hydroxyapatite crystallization in the matrix vesicles (MVs), ALPL/TNAP catalyzes the spread of hydroxyapatite crystallization in the extracellular matrix. Also promotes dephosphorylation of osteopontin (SSP1), an inhibitor of hydroxyapatite crystallization in its phosphorylated state; it is however unclear whether ALPL/TNAP mediates SSP1 dephosphorylation via a direct or indirect manner. Catalyzes dephosphorylation of PLP to pyridoxal (PL), the transportable form of vitamin B6, in order to provide a sufficient amount of PLP in the brain, an essential cofactor for enzymes catalyzing the synthesis of diverse neurotransmitters. Additionally, also able to mediate ATP degradation in a stepwise manner to adenosine, thereby regulating the availability of ligands for purinergic receptors. Also capable of dephosphorylating microbial products, such as lipopolysaccharides (LPS) as well as other phosphorylated small-molecules, such as poly-inosine:cytosine (poly I:C). Acts as a key regulator of adaptive thermogenesis as part of the futile creatine cycle: localizes to the mitochondria of thermogenic fat cells and acts by mediating hydrolysis of N-phosphocreatine to initiate a futile cycle of creatine dephosphorylation and phosphorylation. During the futile creatine cycle, creatine and N-phosphocreatine are in a futile cycle, which dissipates the high energy charge of N-phosphocreatine as heat without performing any mechanical or chemical work. The protein is Alkaline phosphatase, tissue-nonspecific isozyme (Alpl) of Rattus norvegicus (Rat).